The chain runs to 47 residues: Putative heat shock protein HSP90 (47 aa).

Arg-47 is an ATP binding site.

Belongs to the heat shock protein 90 family. Homodimer.

The protein resides in the cytoplasm. In terms of biological role, putative molecular chaperone that may promote the maturation, structural maintenance and proper regulation of specific target proteins. The polypeptide is Putative heat shock protein HSP90 (Populus euphratica (Euphrates poplar)).